Reading from the N-terminus, the 349-residue chain is MGDLITIERHVLESQKDHPGATGEFTKLLYDVAFAAKLVYRHVVRAGLVDILGSAGSTNVQGEEVKKLDLFANEQFTKAIGHHGRFAVMASEENEDIILPPLDKYGKYVLLFDPLDGSSNIDANVSVGTIFSIFKRKSDAGGPGTLEDCLQKGAEQVASGYVIYGSSVMLVYTTGQGVHGFTLDPSIGEFLLSHENIKTPKRGKIYSMNEGYYRYFDDGIKKYIKYLQQEDKASKRPYSARYIGSCVADFHRNLLYGGIFIYPRTAKSPKGKLRLMYEANPLAFICEQAGGRASNGRERILDIKPTELHQRTPLFIGSEEDVKIAEEFEQGLRDIEHDEALCPKSLTSE.

The Mg(2+) site is built by E92, D113, L115, and D116. Substrate contacts are provided by residues 116-119 (DGSS), N209, Y242, and K272. E278 serves as a coordination point for Mg(2+).

The protein belongs to the FBPase class 1 family. As to quaternary structure, homotetramer. Mg(2+) is required as a cofactor.

The protein resides in the cytoplasm. It carries out the reaction beta-D-fructose 1,6-bisphosphate + H2O = beta-D-fructose 6-phosphate + phosphate. It participates in carbohydrate biosynthesis; Calvin cycle. This Chloroherpeton thalassium (strain ATCC 35110 / GB-78) protein is Fructose-1,6-bisphosphatase class 1.